Here is a 373-residue protein sequence, read N- to C-terminus: mRNA-decapping enzyme subunit 2 (373 aa).

The Nudix hydrolase domain maps to 106 to 234 (CRVPVTGAII…HGVSGLKLYM (129 aa)). Residues 139 to 160 (GKKSKDEEDHACAIREVLEETG) carry the Nudix box motif. The Mg(2+) site is built by glutamate 154 and glutamate 158. ATP contacts are provided by arginine 178 and tyrosine 233. An RNA binding region spans residues 233 to 250 (YMVAPFLSSLKSWILKHP). Residues 275–342 (GNGTATVESQ…ESHNTKPVVD (68 aa)) form a disordered region. Residues 298-323 (NSRKPELKRTTMESHSTKPELRKGTM) are compositionally biased toward basic and acidic residues. A compositionally biased stretch (polar residues) spans 324–334 (ESHNTTATVES). Residues 370–373 (GNSA) carry the PDZ-binding motif.

It belongs to the Nudix hydrolase family. DCP2 subfamily. As to quaternary structure, homodimer. Catalytic component of the decapping complex. Interacts with DCP1, DCP5 and VCS. Mn(2+) serves as cofactor. The cofactor is Mg(2+). In terms of tissue distribution, expressed in seedlings, mostly in root tips, root hairs, and the vascular system. Also present in roots, leaves, stems, and flowers.

The protein resides in the cytoplasm. Its subcellular location is the P-body. It carries out the reaction a 5'-end (N(7)-methyl 5'-triphosphoguanosine)-ribonucleoside in mRNA + H2O = N(7)-methyl-GDP + a 5'-end phospho-ribonucleoside in mRNA + 2 H(+). Its activity is regulated as follows. Inhibited by the product 7-methyl GDP. Functionally, catalytic component of the decapping complex necessary for the degradation of mRNAs, both in normal mRNA turnover and in nonsense-mediated mRNA decay. Removes the 7-methyl guanine cap structure from mRNA molecules, yielding a 5'-phosphorylated mRNA fragment and 7m-GDP. Essential for postembryonic development, especially during the formation of the shoot apical meristem (SAM). The polypeptide is mRNA-decapping enzyme subunit 2 (DCP2) (Arabidopsis thaliana (Mouse-ear cress)).